A 382-amino-acid chain; its full sequence is Lipid-A-disaccharide synthase (382 aa).

Belongs to the LpxB family.

It catalyses the reaction a lipid X + a UDP-2-N,3-O-bis[(3R)-3-hydroxyacyl]-alpha-D-glucosamine = a lipid A disaccharide + UDP + H(+). It functions in the pathway bacterial outer membrane biogenesis; LPS lipid A biosynthesis. In terms of biological role, condensation of UDP-2,3-diacylglucosamine and 2,3-diacylglucosamine-1-phosphate to form lipid A disaccharide, a precursor of lipid A, a phosphorylated glycolipid that anchors the lipopolysaccharide to the outer membrane of the cell. This is Lipid-A-disaccharide synthase from Koribacter versatilis (strain Ellin345).